Consider the following 58-residue polypeptide: 6.4 kDa protein (58 aa).

In Pseudomonas phage Pf3 (Bacteriophage Pf3), this protein is 6.4 kDa protein.